Here is a 274-residue protein sequence, read N- to C-terminus: Triosephosphate isomerase (274 aa).

A substrate-binding site is contributed by 31–33 (NWK). Catalysis depends on His118, which acts as the Electrophile. The active-site Proton acceptor is Glu188. Substrate is bound by residues Gly194, Ser234, and 255 to 256 (GG).

Belongs to the triosephosphate isomerase family. Homodimer.

The protein localises to the cytoplasm. The catalysed reaction is D-glyceraldehyde 3-phosphate = dihydroxyacetone phosphate. It participates in carbohydrate biosynthesis; gluconeogenesis. Its pathway is carbohydrate degradation; glycolysis; D-glyceraldehyde 3-phosphate from glycerone phosphate: step 1/1. Its function is as follows. Involved in the gluconeogenesis. Catalyzes stereospecifically the conversion of dihydroxyacetone phosphate (DHAP) to D-glyceraldehyde-3-phosphate (G3P). The polypeptide is Triosephosphate isomerase (Chlamydia trachomatis serovar D (strain ATCC VR-885 / DSM 19411 / UW-3/Cx)).